The chain runs to 232 residues: uncharacterized protein (232 aa).

In terms of domain architecture, Autotransporter spans 1–232 (MIIKKSGGRW…LYTMGVSARF (232 aa)).

This is an uncharacterized protein from Escherichia coli (strain K12).